The chain runs to 779 residues: Ribosome-releasing factor 2, mitochondrial (779 aa).

One can recognise a tr-type G domain in the interval Ala68–Glu353. Residues Ala77 to Thr84, Asp141 to His145, and Asn195 to Asp198 contribute to the GTP site.

It belongs to the TRAFAC class translation factor GTPase superfamily. Classic translation factor GTPase family. EF-G/EF-2 subfamily.

The protein resides in the mitochondrion. It carries out the reaction GTP + H2O = GDP + phosphate + H(+). Its function is as follows. Mitochondrial GTPase that mediates the disassembly of ribosomes from messenger RNA at the termination of mitochondrial protein biosynthesis. Acts in collaboration with MRRF. GTP hydrolysis follows the ribosome disassembly and probably occurs on the ribosome large subunit. Not involved in the GTP-dependent ribosomal translocation step during translation elongation. The polypeptide is Ribosome-releasing factor 2, mitochondrial (Gfm2) (Rattus norvegicus (Rat)).